The primary structure comprises 438 residues: Thymidine phosphorylase (438 aa).

This sequence belongs to the thymidine/pyrimidine-nucleoside phosphorylase family. In terms of assembly, homodimer.

The enzyme catalyses thymidine + phosphate = 2-deoxy-alpha-D-ribose 1-phosphate + thymine. It participates in pyrimidine metabolism; dTMP biosynthesis via salvage pathway; dTMP from thymine: step 1/2. In terms of biological role, the enzymes which catalyze the reversible phosphorolysis of pyrimidine nucleosides are involved in the degradation of these compounds and in their utilization as carbon and energy sources, or in the rescue of pyrimidine bases for nucleotide synthesis. This chain is Thymidine phosphorylase, found in Colwellia psychrerythraea (strain 34H / ATCC BAA-681) (Vibrio psychroerythus).